We begin with the raw amino-acid sequence, 664 residues long: Macoilin (664 aa).

4 helical membrane-spanning segments follow: residues 28-48 (TFLY…DFVV), 75-95 (AFSV…LLFI), 120-140 (VCLP…AIRF), and 154-174 (FAAH…KSYV). The span at 253 to 265 (REKGKEKDKDAKK) shows a compositional bias: basic and acidic residues. Residues 253–274 (REKGKEKDKDAKKHNLGINNNN) form a disordered region. The residue at position 305 (Ser-305) is a Phosphoserine. Polar residues predominate over residues 320–348 (KNYKNASGVVNSSPRSHSATNGSIPSSSS). The interval 320-375 (KNYKNASGVVNSSPRSHSATNGSIPSSSSKNEKKQKCTSKSPSTHKDLMENCIPNN) is disordered. Residue Asn-324 is glycosylated (N-linked (GlcNAc...) asparagine). Ser-332 is modified (phosphoserine). 2 N-linked (GlcNAc...) asparagine glycosylation sites follow: Asn-340 and Asn-452. Positions 630–664 (TSPLSPVSPHYSSKFVETSPSGLDPNASVYQPLKK) are disordered. Residues Ser-631 and Ser-634 each carry the phosphoserine modification. A glycan (N-linked (GlcNAc...) asparagine) is linked at Asn-655.

It belongs to the macoilin family.

Its subcellular location is the rough endoplasmic reticulum membrane. The protein localises to the nucleus membrane. Functionally, plays a role in the regulation of neuronal activity. In Pan troglodytes (Chimpanzee), this protein is Macoilin (MACO1).